Reading from the N-terminus, the 319-residue chain is Thioredoxin reductase (319 aa).

FAD contacts are provided by residues 11-14 (SGPA), 40-41 (IA), Gln45, Asn54, Val87, Cys145, Asp288, and 295-297 (RQA). Cys142 and Cys145 form a disulfide bridge.

This sequence belongs to the class-II pyridine nucleotide-disulfide oxidoreductase family. Homodimer. It depends on FAD as a cofactor.

Its subcellular location is the cytoplasm. It carries out the reaction [thioredoxin]-dithiol + NADP(+) = [thioredoxin]-disulfide + NADPH + H(+). In Yarrowia lipolytica (strain CLIB 122 / E 150) (Yeast), this protein is Thioredoxin reductase (TRR1).